The chain runs to 1692 residues: Adenylate cyclase (1692 aa).

Disordered stretches follow at residues 1 to 22 (MDQSKRLLKSAVPNPPEHFKTG) and 103 to 142 (SLSDTGRTKSDTALAARESSEKSEVPRDTRSAGIKPYKEN). A compositionally biased stretch (basic and acidic residues) spans 120–132 (ESSEKSEVPRDTR). The interval 174–195 (FTNLTFPEPISDDSDSVEFQRD) is required for interaction with gpa2. The Ras-associating domain maps to 292 to 380 (KEFFLRVYRD…SDEEINEEDN (89 aa)). LRR repeat units follow at residues 430 to 450 (ELISLNVSHNLSLDLPLDFME), 454 to 474 (KLKRLDISNNLRSPRGKPITA), 477 to 498 (QLEVLNMSRNDIYELDPLIFSG), 503 to 524 (SLKELNIANNKLFFLPHSTRYL), 526 to 547 (NLTYLDLSYNNFVTFPLIITEL), 549 to 570 (QLETLNFSHNLLSQISSKIGSL), 572 to 594 (KLKHLYLQFNDLSNRLPQEIGLL), 596 to 617 (NLETIDLSYNAITNIASLSECP), 618 to 639 (KLNSINVACNLLSFYEYSNPSA), 660 to 681 (NLVYFDISHAKLIGLKDSVIET), 684 to 705 (NVETVKVNYNHFTSISDAISAM), 707 to 729 (NLKYLSCTNCEMSYVSPNLGKLK), 730 to 751 (HLVHLDLHANNIKIFPEEVWQV), 753 to 774 (SLKVVNLSSNILEKIKLPVATS), 783 to 805 (QLKIMRTLSGNPVSSLSSQEFVM), 807 to 827 (TVEELYLVDNRLGNDCFTALE), 831 to 852 (CLKVLNLSYNYLTEIPSKFFQN), 855 to 876 (DLKHLFVSGNELANLSISSTAQ), 878 to 899 (LLETLYANGNRLSSFPKNEALS), 901 to 922 (SLRFLDISTNNLQNLAVEKAEK), and 930 to 951 (QLEYLNLSGNTWFRFSEHEDTN). Residues 995-1275 (RYGVCGYLSR…KNVLVVIVEL (281 aa)) form the PPM-type phosphatase domain. The region spanning 1332–1469 (AMVFTDIKNS…PVVNRTSRVV (138 aa)) is the Guanylate cyclase domain. The Mg(2+) site is built by Asp-1337 and Asp-1380. Mn(2+)-binding residues include Asp-1337 and Asp-1380. Over residues 1585 to 1597 (SDSKSVHGEEGGS) the composition is skewed to basic and acidic residues. The tract at residues 1585–1614 (SDSKSVHGEEGGSGKRSVSSLRNVSPSEST) is disordered. Positions 1600 to 1614 (RSVSSLRNVSPSEST) are enriched in polar residues.

This sequence belongs to the adenylyl cyclase class-3 family. Interacts (via N-terminus) with gpa2; the interaction is direct and serves to activate adenylate cyclase and cAMP-PKA signaling, to repress sexual development and gluconeogenesis. Interacts with git1. Mn(2+) is required as a cofactor.

The protein resides in the cytoplasm. The catalysed reaction is ATP = 3',5'-cyclic AMP + diphosphate. Its activity is regulated as follows. Activated by binding G protein gpa2. Activated by git1. In contrast to yeast cyclase, S.pombe cyclase is not likely to be regulated by RAS proteins. Acts in glucose-induced cAMP signaling by catalyzing the synthesis of the second messenger, cAMP to activate PKA signaling and repress sexual development and gluconeogenesis. The sequence is that of Adenylate cyclase from Schizosaccharomyces pombe (strain 972 / ATCC 24843) (Fission yeast).